Here is a 128-residue protein sequence, read N- to C-terminus: Sulfurtransferase TusD (128 aa).

Cys-78 acts as the Cysteine persulfide intermediate in catalysis.

This sequence belongs to the DsrE/TusD family. As to quaternary structure, heterohexamer, formed by a dimer of trimers. The hexameric TusBCD complex contains 2 copies each of TusB, TusC and TusD. The TusBCD complex interacts with TusE.

Its subcellular location is the cytoplasm. In terms of biological role, part of a sulfur-relay system required for 2-thiolation of 5-methylaminomethyl-2-thiouridine (mnm(5)s(2)U) at tRNA wobble positions. Accepts sulfur from TusA and transfers it in turn to TusE. The chain is Sulfurtransferase TusD from Escherichia coli O17:K52:H18 (strain UMN026 / ExPEC).